We begin with the raw amino-acid sequence, 215 residues long: Nucleoside triphosphate pyrophosphatase (215 aa).

Asp-77 serves as the catalytic Proton acceptor.

This sequence belongs to the Maf family. The cofactor is a divalent metal cation.

It localises to the cytoplasm. The enzyme catalyses a ribonucleoside 5'-triphosphate + H2O = a ribonucleoside 5'-phosphate + diphosphate + H(+). It catalyses the reaction a 2'-deoxyribonucleoside 5'-triphosphate + H2O = a 2'-deoxyribonucleoside 5'-phosphate + diphosphate + H(+). Nucleoside triphosphate pyrophosphatase. May have a dual role in cell division arrest and in preventing the incorporation of modified nucleotides into cellular nucleic acids. This chain is Nucleoside triphosphate pyrophosphatase, found in Rickettsia peacockii (strain Rustic).